The chain runs to 208 residues: Probable GTP-binding protein EngB (208 aa).

Residues 25–199 (TGIEVAFAGR…RQKLDSWYNG (175 aa)) form the EngB-type G domain. GTP contacts are provided by residues 33–40 (GRSNAGKS), 60–64 (GRTQL), 78–81 (DLPG), 145–148 (TKSD), and 178–180 (FSS). The Mg(2+) site is built by serine 40 and threonine 62.

It belongs to the TRAFAC class TrmE-Era-EngA-EngB-Septin-like GTPase superfamily. EngB GTPase family. The cofactor is Mg(2+).

In terms of biological role, necessary for normal cell division and for the maintenance of normal septation. The polypeptide is Probable GTP-binding protein EngB (Enterobacter sp. (strain 638)).